The sequence spans 164 residues: V-type proton ATPase subunit c3 (164 aa).

At 1–11 (MSTFSGDETAP) the chain is on the lumenal side. Residues 12 to 32 (FFGFLGAAAALVFSCMGAAYG) form a helical membrane-spanning segment. At 33-54 (TAKSGVGVASMGVMRPELVMKS) the chain is on the cytoplasmic side. Residues 55–75 (IVPVVMAGVLGIYGLIIAVII) form a helical membrane-spanning segment. The Lumenal segment spans residues 76 to 94 (STGINPKAKSYYLFDGYAH). Residues 95-116 (LSSGLACGLAGLSAGMAIGIVG) form a helical membrane-spanning segment. At 117-128 (DAGVRANAQQPK) the chain is on the cytoplasmic side. Residues 129 to 154 (LFVGMILILIFAEALALYGLIVGIIL) traverse the membrane as a helical segment. The Lumenal portion of the chain corresponds to 155–164 (SSRAGQSRAE).

This sequence belongs to the V-ATPase proteolipid subunit family. In terms of assembly, V-ATPase is a heteromultimeric enzyme composed of a peripheral catalytic V1 complex (components A to H) attached to an integral membrane V0 proton pore complex (components: a, c, c'', d and e). The proteolipid components c and c'' are present as a hexameric ring that forms the proton-conducting pore. In terms of tissue distribution, expressed in leaf, root, flower and silique.

It localises to the vacuole membrane. In terms of biological role, proton-conducting pore forming subunit of the membrane integral V0 complex of vacuolar ATPase. V-ATPase is responsible for acidifying a variety of intracellular compartments in eukaryotic cells. The sequence is that of V-type proton ATPase subunit c3 (VHA-c3) from Arabidopsis thaliana (Mouse-ear cress).